The following is a 127-amino-acid chain: Fluoride-specific ion channel FluC (127 aa).

4 helical membrane-spanning segments follow: residues 4–24 (LLLA…MLSM), 35–55 (LGTL…FAWF), 71–91 (TGFC…VFLL), and 103–123 (VLVN…IFSA). Residues Gly75 and Thr78 each contribute to the Na(+) site.

Belongs to the fluoride channel Fluc/FEX (TC 1.A.43) family.

It localises to the cell inner membrane. The enzyme catalyses fluoride(in) = fluoride(out). Its activity is regulated as follows. Na(+) is not transported, but it plays an essential structural role and its presence is essential for fluoride channel function. Its function is as follows. Fluoride-specific ion channel. Important for reducing fluoride concentration in the cell, thus reducing its toxicity. The chain is Fluoride-specific ion channel FluC from Escherichia fergusonii (strain ATCC 35469 / DSM 13698 / CCUG 18766 / IAM 14443 / JCM 21226 / LMG 7866 / NBRC 102419 / NCTC 12128 / CDC 0568-73).